The primary structure comprises 85 residues: Defensin-like protein 11 (85 aa).

An N-terminal signal peptide occupies residues 1–29 (MGKTISFSAIILVFLLVSTGLMKQGDAQA). Cystine bridges form between Cys32-Cys84, Cys44-Cys68, Cys54-Cys75, and Cys58-Cys77.

This sequence belongs to the DEFL family.

It localises to the secreted. This chain is Defensin-like protein 11, found in Arabidopsis thaliana (Mouse-ear cress).